Here is a 566-residue protein sequence, read N- to C-terminus: 15-cis-phytoene desaturase, chloroplastic/chromoplastic (566 aa).

Residues 1–86 (MVVFGNVSAA…ASLSASFRSA (86 aa)) constitute a chloroplast and chromoplast transit peptide. FAD-binding positions include alanine 103, 122 to 123 (EA), lysine 130, 147 to 148 (HI), and tyrosine 153. Substrate is bound at residue arginine 288. The FAD site is built by isoleucine 330 and aspartate 519. Alanine 527 provides a ligand contact to substrate. Methionine 529 contacts FAD.

Belongs to the carotenoid/retinoid oxidoreductase family. As to quaternary structure, homotetramer. Requires FAD as cofactor.

It is found in the plastid. The protein resides in the chloroplast. The protein localises to the chromoplast. It localises to the membrane. It catalyses the reaction 2 a plastoquinone + 15-cis-phytoene = 9,9',15-tri-cis-zeta-carotene + 2 a plastoquinol. Its pathway is carotenoid biosynthesis; lycopene biosynthesis. Converts phytoene into zeta-carotene via the intermediary of phytofluene by the symmetrical introduction of two double bonds at the C-11 and C-11' positions of phytoene with a concomitant isomerization of two neighboring double bonds at the C9 and C9' positions from trans to cis. The polypeptide is 15-cis-phytoene desaturase, chloroplastic/chromoplastic (PDS) (Arabidopsis thaliana (Mouse-ear cress)).